A 62-amino-acid chain; its full sequence is Mastoparan-AF (62 aa).

The first 25 residues, 1–25, serve as a signal peptide directing secretion; the sequence is MKNTILILFTAFIALLGFFGMSAEA. AXPX repeat units lie at residues 25-28, 29-32, 33-36, and 43-46; these read ADPI and ADPE. A propeptide spanning residues 26–47 is cleaved from the precursor; sequence DPIADPIADPISGPNAEADPEA. Phe61 is subject to Phenylalanine amide.

Belongs to the MCD family. Mastoparan subfamily. In terms of tissue distribution, expressed by the venom gland.

The protein resides in the secreted. It is found in the target cell membrane. Its function is as follows. Antimicrobial and mast cell degranulating peptide. Has broad spectrum antibacterial activity against both Gram-positive and Gram-negative bacteria (S.aureus MIC=16-32 ug/ml, S.xylosus MIC=1.5 ug/ml, S.alactolyticus MIC=8 ug/ml, C.koseri MIC=4 ug/ml, E.coli MIC=4-32 ug/ml, K.pneumoniae MIC=32 ug/ml, P.aerugiosa MIC=96 ug/ml, S.choleraesuis MIC=16 ug/ml, S.typhimurium MIC=32 ug/ml, V.parahamelytics MIC=16 ug/ml). Is also active on multi-antibiotic resistant hemolytic E.coli O157:H7. Acts by affecting membrane permeability. On E.coli O157:H7, acts through multiple membrane disruption patterns, including large perforations (full opening) at apical ends (hollow tubes), vesicle budding, forming dents, and membrane corrugation and invagination leading to irregular pits or pores. Exerts 40% lower membrane permeabilization activities on E.coli O157:H7 than on the non-pathogen E.coli BL21. Shows little hemolytic activities on sheep, chicken and human erythrocytes, but with a higher activity on chicken erythrocytes. Its mast cell degranulation activity may be related to the activation of G-protein coupled receptors in mast cells as well as interaction with other proteins located in cell endosomal membranes in the mast cells. This is Mastoparan-AF from Vespa affinis (Lesser banded hornet).